We begin with the raw amino-acid sequence, 485 residues long: Cysteine--tRNA ligase (485 aa).

Cys-27 lines the Zn(2+) pocket. The short motif at 29-39 (ITAYDFSHIGH) is the 'HIGH' region element. Cys-208, His-233, and Glu-237 together coordinate Zn(2+). Positions 265-269 (KMSKS) match the 'KMSKS' region motif. Lys-268 provides a ligand contact to ATP.

The protein belongs to the class-I aminoacyl-tRNA synthetase family. In terms of assembly, monomer. It depends on Zn(2+) as a cofactor.

Its subcellular location is the cytoplasm. The catalysed reaction is tRNA(Cys) + L-cysteine + ATP = L-cysteinyl-tRNA(Cys) + AMP + diphosphate. This chain is Cysteine--tRNA ligase, found in Lawsonia intracellularis (strain PHE/MN1-00).